The chain runs to 637 residues: Extracellular metalloproteinase MEP (637 aa).

Positions 1–21 (MRSVDSLLLLGLTGLASQANA) are cleaved as a signal peptide. A propeptide spanning residues 22–246 (HPAKRQPNDS…VVGVVDYVAD (225 aa)) is cleaved from the precursor. N288 is a glycosylation site (N-linked (GlcNAc...) asparagine). H431 contacts Zn(2+). The active site involves E432. H435 provides a ligand contact to Zn(2+).

It belongs to the peptidase M36 family. The cofactor is Zn(2+).

Its subcellular location is the secreted. Secreted metalloproteinase that probably acts as a virulence factor. Cleaves Z.mays Endochitinase A (CHIA) between residues 'Gly-29' and 'Cys-30'. This chain is Extracellular metalloproteinase MEP (MEP), found in Fusarium vanettenii (strain ATCC MYA-4622 / CBS 123669 / FGSC 9596 / NRRL 45880 / 77-13-4) (Fusarium solani subsp. pisi).